A 304-amino-acid chain; its full sequence is GTPase Era (304 aa).

An Era-type G domain is found at 11–186; it reads YCGFIAIVGR…LRKGVHHFPE (176 aa). Positions 19-26 are G1; it reads GRPNVGKS. 19–26 serves as a coordination point for GTP; sequence GRPNVGKS. Residues 45-49 are G2; that stretch reads QTTRH. Positions 66-69 are G3; it reads DTPG. Residues 66-70 and 128-131 contribute to the GTP site; these read DTPGL and NKVD. A G4 region spans residues 128–131; sequence NKVD. Residues 158–160 are G5; that stretch reads ISA. Positions 210-287 constitute a KH type-2 domain; the sequence is TGEELPYSVT…HLELWVKVKS (78 aa).

It belongs to the TRAFAC class TrmE-Era-EngA-EngB-Septin-like GTPase superfamily. Era GTPase family. As to quaternary structure, monomer.

It is found in the cytoplasm. The protein localises to the cell inner membrane. Its function is as follows. An essential GTPase that binds both GDP and GTP, with rapid nucleotide exchange. Plays a role in 16S rRNA processing and 30S ribosomal subunit biogenesis and possibly also in cell cycle regulation and energy metabolism. The sequence is that of GTPase Era from Histophilus somni (strain 2336) (Haemophilus somnus).